Reading from the N-terminus, the 298-residue chain is Rhodopsin (298 aa).

Topologically, residues 1-15 (IHLHWYEYPPMNPMM) are extracellular. The helical transmembrane segment at 16-40 (YPLLLIFMLFTGILCLAGNFVTIWV) threads the bilayer. Topologically, residues 41 to 52 (FMNTKSLRTPAN) are cytoplasmic. The chain crosses the membrane as a helical span at residues 53-75 (LLVVNLAMSDFLMMFTMFPPMMV). The Extracellular portion of the chain corresponds to 76–89 (TCYYHTWTLGPTFC). Cysteine 89 and cysteine 166 are oxidised to a cystine. Residues 90–112 (QVYAFLGNLCGCASIWTMVFITF) form a helical membrane-spanning segment. A 'Ionic lock' involved in activated form stabilization motif is present at residues 113-115 (DRY). At 113-131 (DRYNVIVKGVAGEPLSTKK) the chain is on the cytoplasmic side. Residues 132–152 (ASLWILTIWVLSTTWCMAPFF) traverse the membrane as a helical segment. At 153-179 (GWNHYVPEGNLTGCGTDYLSEDILSRS) the chain is on the extracellular side. N-linked (GlcNAc...) asparagine glycosylation is present at asparagine 162. Residues 180–201 (YLYVYSTWVYFLPLAITIYCYV) traverse the membrane as a helical segment. Over 202 to 242 (FIIKAVAAHEKGMRDQAKKMGIKSLRNEEAQKTSAECRLAK) the chain is Cytoplasmic. The helical transmembrane segment at 243-264 (IAMTTVALWFIAWTPYLLINWV) threads the bilayer. Residues 265–275 (GMFARSYLSPV) lie on the Extracellular side of the membrane. Residues 276 to 297 (YTIWGYVFAKANAVYNPIVYAI) traverse the membrane as a helical segment. Lysine 285 is modified (N6-(retinylidene)lysine).

Belongs to the G-protein coupled receptor 1 family. Opsin subfamily. In terms of assembly, homodimer. Interacts with GNAQ. In terms of processing, contains one covalently linked retinal chromophore.

It is found in the cell projection. The protein localises to the rhabdomere membrane. Functionally, photoreceptor required for image-forming vision at low light intensity. Can use both retinal and 3-dehydroretinal as visual pigment. Light-induced isomerization of 11-cis to all-trans retinal triggers a conformational change that activates signaling via G-proteins. Signaling via GNAQ probably mediates the activation of phospholipase C. The chain is Rhodopsin (RHO) from Procambarus orcinus (Crayfish).